Here is a 314-residue protein sequence, read N- to C-terminus: Putative integrase/recombinase y4rB (314 aa).

A Core-binding (CB) domain is found at 2 to 79; sequence STFRQAVQEY…YVRVFARYRA (78 aa). Residues 100–304 form the Tyr recombinase domain; sequence ARPYLYSKED…SPELMKEAMR (205 aa). Residues Arg147, Lys172, His248, Arg251, and His282 contribute to the active site. The O-(3'-phospho-DNA)-tyrosine intermediate role is filled by Tyr291.

The protein belongs to the 'phage' integrase family.

This Sinorhizobium fredii (strain NBRC 101917 / NGR234) protein is Putative integrase/recombinase y4rB.